The chain runs to 346 residues: MGENLPLLLSAALGKKVNRPPVWMMRQAGRYMKIYRDLRERYPSFRERSENPELSYEISMQPFHAFKPDGVILFSDILTPLPGMGINFEIIESKGPIIEDPIRTLNQVENLKELSPSESLSFVGEVLTSLKKDVNNEATVLGFVGAPWTLAAYVVEGKSSKNYSLIKSMAFNKPDLLHKLLDHFAKSIGEYLKYQIKSGAQVVQIFDSWAGQLSPQDYDIFAGPYQKKVVEIVKAEYPETPIILYISGSAGVLERMAKTGVDIISLDWTVDIEEACKRIPRGIGIQGNVDPGILFGNKESIKERIDNTFNKIKDRKYILNLGHGILPGTPEENAQTFFEHGKKLTY.

Residues 26–30 (RQAGR), Asp-76, Tyr-153, Ser-208, and His-323 contribute to the substrate site.

It belongs to the uroporphyrinogen decarboxylase family. Homodimer.

It is found in the cytoplasm. It carries out the reaction uroporphyrinogen III + 4 H(+) = coproporphyrinogen III + 4 CO2. It participates in porphyrin-containing compound metabolism; protoporphyrin-IX biosynthesis; coproporphyrinogen-III from 5-aminolevulinate: step 4/4. Its function is as follows. Catalyzes the decarboxylation of four acetate groups of uroporphyrinogen-III to yield coproporphyrinogen-III. This chain is Uroporphyrinogen decarboxylase, found in Prochlorococcus marinus (strain MIT 9301).